Here is a 588-residue protein sequence, read N- to C-terminus: MKLEFTEKNYNSFVLQNLNKQRKRKEYWDMALTVDHHVFFAHRNVLAAVSPLVKSLVSSNDMKTTDELYITIDPNYLSPATVDQLLDYFYSGKVVISEQNVEELLRGAQYFNTPRLRIHCNDFLIKSIRRVNCLRYLFLAELFELKEVSDLAYSGIRDNFHFWASPEGSMHFMRCPPVIFGRLLRDENLHVLNEDQALSALINWVYFRKEEREKYFKKFFNYINLNAVSNKTLMFASNKLTGLENNSAHATLIESVLMDRKQERPCSLLSYQRKGALLDSVVILGGQKAHGKFNDGVFAYIIQENLWLKLSEMPYRAAALSATAAGRYIYISGGTTEQISGLKTAWRYDMDDNSWTKLPDLPIGLVFHTMVTCGGTVYSVGGSIAPRRYVSNIYRYDERKEAWCLAGKMSIPMDGTAVITKGDRNLYIVTGRCLVKGYISRVGVVDCFDTCTGEVVQCITFPIEFNHRPLLSFHQDNILRVHSHRQSVEINLQKIKANKSTTSVPLLPNSCPLDVSHAICSIGDSKVFVCGGVTTASDVQTKDYTINPNAYLLDQKIGEWKTLACPPEALDCPACCLAKLPCKILQRI.

The BTB domain maps to 28–98; that stretch reads WDMALTVDHH…FYSGKVVISE (71 aa). One can recognise a BACK domain in the interval 133-235; the sequence is CLRYLFLAEL…NAVSNKTLMF (103 aa). At S149 the chain carries Phosphoserine. Kelch repeat units lie at residues 280–327, 328–375, 377–423, 425–475, 476–525, and 526–580; these read SVVI…AAGR, YIYI…TCGG, VYSV…TKGD, NLYI…SFHQ, DNIL…IGDS, and KVFV…LAKL.

In terms of assembly, interacts with CYLC1; the interaction may be relevant for proper acrosome attachment to the nuclear envelope.

The protein resides in the cytoplasm. It is found in the cytoskeleton. The protein localises to the perinuclear theca. Its subcellular location is the calyx. Its function is as follows. Required for both nuclear and acrosomal shaping during spermiogenesis. The chain is Calicin (Ccin) from Rattus norvegicus (Rat).